A 1138-amino-acid polypeptide reads, in one-letter code: Myelin regulatory factor (1138 aa).

Over 1–768 the chain is Cytoplasmic; the sequence is MEVVDETEAL…CISQRFLQGT (768 aa). 4 disordered regions span residues 56–150, 171–200, 246–267, and 279–339; these read TASF…YSPQ, VSSRLEHPPPPPAHLPGPPPPPPPPPHYPV, AELPPHPSKKRKHSESPPNTLN, and PGTV…SDSL. Residues 67–88 show a composition bias toward low complexity; sequence PGSSGLHHLSPPGSGPSPGRHG. K123 carries the N6-acetyllysine modification. The span at 178–198 shows a compositional bias: pro residues; the sequence is PPPPPAHLPGPPPPPPPPPHY. The segment at residues 250-541 is a DNA-binding region (NDT80); that stretch reads PHPSKKRKHS…SNPGQFESDS (292 aa). Positions 254-257 match the Nuclear localization signal motif; the sequence is KKRK. Residues 286 to 302 show a composition bias toward pro residues; the sequence is PPHPARAPSPPWPPQGP. A compositionally biased stretch (low complexity) spans 329–339; sequence SPGLLQDSDSL. Positions 491-494 match the Nuclear localization signal motif; it reads KKGK. Residues 587–696 enclose the Peptidase S74 domain; the sequence is SDLRAKEHVQ…KLTDNLETRI (110 aa). The stretch at 680–711 forms a coiled coil; it reads GAVKELCKLTDNLETRIDELERWSHKLAKLRR. The span at 721–733 shows a compositional bias: polar residues; it reads SGAFSHAGSQFSR. A disordered region spans residues 721–753; the sequence is SGAFSHAGSQFSRAGSVPHKKRPPKLANKSSPA. Positions 765 to 1003 are required for interaction with TMEM98; that stretch reads LQGTIIALVV…QGQLDPAPSL (239 aa). A helical transmembrane segment spans residues 769–789; it reads IIALVVVMAFSVVSMSTLYVL. The Lumenal portion of the chain corresponds to 790-1138; the sequence is SLRSEEDLVD…YYFHFYRLCD (349 aa). Positions 891-900 are enriched in low complexity; that stretch reads ATDPALGPTL. Disordered stretches follow at residues 891–922 and 951–999; these read ATDPALGPTLTPTPSPSSNPKHSGPGQMAPLP and ASPV…QLDP. Composition is skewed to polar residues over residues 961-974 and 987-999; these read QSKTKNSPSFNLQS and PAQFTQTQGQLDP. N-linked (GlcNAc...) asparagine glycans are attached at residues N1030, N1052, and N1116.

Belongs to the MRF family. As to quaternary structure, homotrimer. Interacts (via C-terminal region) with TMEM98; the interaction inhibits MYRF self-cleavage. In terms of processing, glycosylated. Follows autocatalytic cleavage via the peptidase S74 domain. Autoprocessing is apparently constitutive and is essential for transcriptional activity. Autocatalytic cleavage is inhibited by interaction with TMEM98. Specifically expressed by postmitotic oligodendrocytes in the CNS. Not detected in the peripheral nervous system (PNS).

It is found in the endoplasmic reticulum membrane. The protein resides in the nucleus. It localises to the cytoplasm. Constitutes a precursor of the transcription factor. Mediates the autocatalytic cleavage that releases the Myelin regulatory factor, N-terminal component that specifically activates transcription of central nervous system (CNS) myelin genes. Its function is as follows. Membrane-bound part that has no transcription factor activity and remains attached to the endoplasmic reticulum membrane following cleavage. Functionally, transcription factor that specifically activates expression of myelin genes such as MBP, MOG, MAG, DUSP15 and PLP1 during oligodendrocyte (OL) maturation, thereby playing a central role in oligodendrocyte maturation and CNS myelination. Specifically recognizes and binds DNA sequence 5'-CTGGYAC-3' in the regulatory regions of myelin-specific genes and directly activates their expression. Not only required during oligodendrocyte differentiation but is also required on an ongoing basis for the maintenance of expression of myelin genes and for the maintenance of a mature, viable oligodendrocyte phenotype. This Mus musculus (Mouse) protein is Myelin regulatory factor (Myrf).